The primary structure comprises 181 residues: Large ribosomal subunit protein uL5 (181 aa).

It belongs to the universal ribosomal protein uL5 family. In terms of assembly, part of the 50S ribosomal subunit; part of the 5S rRNA/L5/L18/L25 subcomplex. Contacts the 5S rRNA and the P site tRNA. Forms a bridge to the 30S subunit in the 70S ribosome.

Functionally, this is one of the proteins that bind and probably mediate the attachment of the 5S RNA into the large ribosomal subunit, where it forms part of the central protuberance. In the 70S ribosome it contacts protein S13 of the 30S subunit (bridge B1b), connecting the 2 subunits; this bridge is implicated in subunit movement. Contacts the P site tRNA; the 5S rRNA and some of its associated proteins might help stabilize positioning of ribosome-bound tRNAs. The protein is Large ribosomal subunit protein uL5 of Nitrosococcus oceani (strain ATCC 19707 / BCRC 17464 / JCM 30415 / NCIMB 11848 / C-107).